The sequence spans 239 residues: Ribosomal RNA small subunit methyltransferase G (239 aa).

S-adenosyl-L-methionine-binding positions include Gly-78, Phe-83, 129–130, and Arg-148; that span reads AE.

The protein belongs to the methyltransferase superfamily. RNA methyltransferase RsmG family.

It localises to the cytoplasm. Its function is as follows. Specifically methylates the N7 position of a guanine in 16S rRNA. This Clostridium botulinum (strain Kyoto / Type A2) protein is Ribosomal RNA small subunit methyltransferase G.